The following is a 131-amino-acid chain: Peptide methionine sulfoxide reductase MsrB (131 aa).

The MsrB domain maps to 8-130; sequence LDTWREELTD…NSLSLKLVPR (123 aa). Residues Cys47, Cys50, Cys96, and Cys99 each contribute to the Zn(2+) site. Residue Cys119 is the Nucleophile of the active site.

The protein belongs to the MsrB Met sulfoxide reductase family. It depends on Zn(2+) as a cofactor.

It carries out the reaction L-methionyl-[protein] + [thioredoxin]-disulfide + H2O = L-methionyl-(R)-S-oxide-[protein] + [thioredoxin]-dithiol. This chain is Peptide methionine sulfoxide reductase MsrB, found in Ectopseudomonas mendocina (strain ymp) (Pseudomonas mendocina).